Here is a 249-residue protein sequence, read N- to C-terminus: MRIDGRKNEQIRHVKVTRHYTKYAEGSVYIEVGDTKVLCNVSIEDKVPPFMKGTGSGWITAEYNMLPRSTETRKIRDIARLKIDGRTMEIQRLIGRALRSVVDLKALGEKTLWIDCDVIQADGGTRTTAISGAFIALVDAVNKLHKIKPFKIYPIRSFVAAVSVGIVNEEKILDLCYQEDSKAKVDMNIIMTDEGSFVEVQGTGEESPYTRAELNELLDLGEKGIKQMINVQKESLKMDSLWIGTGGNN.

Phosphate is bound by residues arginine 86 and 124-126 (GTR).

This sequence belongs to the RNase PH family. Homohexameric ring arranged as a trimer of dimers.

It carries out the reaction tRNA(n+1) + phosphate = tRNA(n) + a ribonucleoside 5'-diphosphate. Functionally, phosphorolytic 3'-5' exoribonuclease that plays an important role in tRNA 3'-end maturation. Removes nucleotide residues following the 3'-CCA terminus of tRNAs; can also add nucleotides to the ends of RNA molecules by using nucleoside diphosphates as substrates, but this may not be physiologically important. Probably plays a role in initiation of 16S rRNA degradation (leading to ribosome degradation) during starvation. This Clostridium botulinum (strain Eklund 17B / Type B) protein is Ribonuclease PH.